A 213-amino-acid polypeptide reads, in one-letter code: Protein-L-isoaspartate O-methyltransferase (213 aa).

Residue Ser-61 is part of the active site.

It belongs to the methyltransferase superfamily. L-isoaspartyl/D-aspartyl protein methyltransferase family.

Its subcellular location is the cytoplasm. It carries out the reaction [protein]-L-isoaspartate + S-adenosyl-L-methionine = [protein]-L-isoaspartate alpha-methyl ester + S-adenosyl-L-homocysteine. Catalyzes the methyl esterification of L-isoaspartyl residues in peptides and proteins that result from spontaneous decomposition of normal L-aspartyl and L-asparaginyl residues. It plays a role in the repair and/or degradation of damaged proteins. The protein is Protein-L-isoaspartate O-methyltransferase of Maricaulis maris (strain MCS10) (Caulobacter maris).